A 151-amino-acid polypeptide reads, in one-letter code: Small ribosomal subunit protein uS15 (151 aa).

K27 is subject to N6-acetyllysine; alternate. Position 27 is an N6-succinyllysine; alternate (K27). K27 participates in a covalent cross-link: Glycyl lysine isopeptide (Lys-Gly) (interchain with G-Cter in ubiquitin). Residue S30 is modified to Phosphoserine. Position 34 is an N6-succinyllysine (K34). At Y38 the chain carries Phosphotyrosine. K43 is covalently cross-linked (Glycyl lysine isopeptide (Lys-Gly) (interchain with G-Cter in SUMO2)).

It belongs to the universal ribosomal protein uS15 family. Component of the small ribosomal subunit. Part of the small subunit (SSU) processome, composed of more than 70 proteins and the RNA chaperone small nucleolar RNA (snoRNA) U3. In terms of processing, ubiquitinated at Lys-27 by RNF14 and RNF25 in response to ribosome collisions (ribosome stalling).

The protein localises to the cytoplasm. Its subcellular location is the nucleus. The protein resides in the nucleolus. Its function is as follows. Component of the small ribosomal subunit. The ribosome is a large ribonucleoprotein complex responsible for the synthesis of proteins in the cell. Part of the small subunit (SSU) processome, first precursor of the small eukaryotic ribosomal subunit. During the assembly of the SSU processome in the nucleolus, many ribosome biogenesis factors, an RNA chaperone and ribosomal proteins associate with the nascent pre-rRNA and work in concert to generate RNA folding, modifications, rearrangements and cleavage as well as targeted degradation of pre-ribosomal RNA by the RNA exosome. The polypeptide is Small ribosomal subunit protein uS15 (Homo sapiens (Human)).